The primary structure comprises 362 residues: Fructose-bisphosphate aldolase (362 aa).

D-glyceraldehyde 3-phosphate is bound at residue S65. Residue D112 is the Proton donor of the active site. Residues H113, D147, E177, and H229 each contribute to the Zn(2+) site. Residue G230 participates in dihydroxyacetone phosphate binding. Position 268 (H268) interacts with Zn(2+). Dihydroxyacetone phosphate contacts are provided by residues 269 to 271 and 290 to 293; these read GGS and NVDT.

This sequence belongs to the class II fructose-bisphosphate aldolase family. Homodimer. Zn(2+) serves as cofactor.

The catalysed reaction is beta-D-fructose 1,6-bisphosphate = D-glyceraldehyde 3-phosphate + dihydroxyacetone phosphate. Its pathway is carbohydrate degradation; glycolysis; D-glyceraldehyde 3-phosphate and glycerone phosphate from D-glucose: step 4/4. Catalyzes the aldol condensation of dihydroxyacetone phosphate (DHAP or glycerone-phosphate) with glyceraldehyde 3-phosphate (G3P) to form fructose 1,6-bisphosphate (FBP) in gluconeogenesis and the reverse reaction in glycolysis. The chain is Fructose-bisphosphate aldolase (fbaA) from Aspergillus oryzae (strain ATCC 42149 / RIB 40) (Yellow koji mold).